A 931-amino-acid chain; its full sequence is Protein translocase subunit SecA (931 aa).

ATP is bound by residues Q87, G105–T109, and D523. C915, C917, C926, and H927 together coordinate Zn(2+).

Belongs to the SecA family. In terms of assembly, monomer and homodimer. Part of the essential Sec protein translocation apparatus which comprises SecA, SecYEG and auxiliary proteins SecDF-YajC and YidC. Zn(2+) serves as cofactor.

It localises to the cell inner membrane. The protein localises to the cytoplasm. It carries out the reaction ATP + H2O + cellular proteinSide 1 = ADP + phosphate + cellular proteinSide 2.. Part of the Sec protein translocase complex. Interacts with the SecYEG preprotein conducting channel. Has a central role in coupling the hydrolysis of ATP to the transfer of proteins into and across the cell membrane, serving both as a receptor for the preprotein-SecB complex and as an ATP-driven molecular motor driving the stepwise translocation of polypeptide chains across the membrane. This chain is Protein translocase subunit SecA, found in Xanthobacter autotrophicus (strain ATCC BAA-1158 / Py2).